The primary structure comprises 262 residues: Enoyl-[acyl-carrier-protein] reductase [NADH] FabI (262 aa).

Residues Gly13, 19–20 (SI), Gln40, 64–65 (DV), and Ile92 contribute to the NAD(+) site. Ala95 is a binding site for substrate. Active-site proton acceptor residues include Tyr146 and Tyr156. Residues Lys163 and 192-196 (IRTLA) each bind NAD(+).

This sequence belongs to the short-chain dehydrogenases/reductases (SDR) family. FabI subfamily. In terms of assembly, homotetramer.

It catalyses the reaction a 2,3-saturated acyl-[ACP] + NAD(+) = a (2E)-enoyl-[ACP] + NADH + H(+). It carries out the reaction (2E)-butenoyl-[ACP] + NADH + H(+) = butanoyl-[ACP] + NAD(+). The catalysed reaction is (2E)-decenoyl-[ACP] + NADH + H(+) = decanoyl-[ACP] + NAD(+). The enzyme catalyses (2E)-hexadecenoyl-[ACP] + NADH + H(+) = hexadecanoyl-[ACP] + NAD(+). It catalyses the reaction (2E,9Z)-hexadecadienoyl-[ACP] + NADH + H(+) = (9Z)-hexadecenoyl-[ACP] + NAD(+). It carries out the reaction (2E)-5-methylhexenoyl-[ACP] + NADH + H(+) = 5-methylhexanoyl-[ACP] + NAD(+). The protein operates within lipid metabolism; fatty acid biosynthesis. Its pathway is cofactor biosynthesis; biotin biosynthesis. Its activity is regulated as follows. Inhibited by diazaborines, triclosan (5-chloro-2-2,4-dichlorophenoxyphenol), 1,4-disubstituted imidazoles, 1,4-benzodiazepine derivatives, naphthyridinone derivatives, luteolin and curcumin. The antibiotic diazaborine interferes with the activity by binding to the protein and NAD. Its function is as follows. Catalyzes the reduction of a carbon-carbon double bond in an enoyl moiety that is covalently linked to an acyl carrier protein (ACP). Involved in the elongation cycle of fatty acid which are used in the lipid metabolism and in the biotin biosynthesis. This is Enoyl-[acyl-carrier-protein] reductase [NADH] FabI (fabI) from Escherichia coli (strain K12).